The primary structure comprises 201 residues: Nascent polypeptide-associated complex subunit alpha (201 aa).

A compositionally biased stretch (basic and acidic residues) spans 1–20 (MANPRVEELPDEEVKKTVVD). Disordered regions lie at residues 1-51 (MANP…SRNE) and 118-165 (AQQL…IEDK). A compositionally biased stretch (acidic residues) spans 21-36 (DHDDDSSSDSDGEEET). Residues 48–113 (SRNEKKARKA…AKIEDLNASA (66 aa)) form the NAC-A/B domain. Residues 126 to 149 (GHDHDHAGHSHGEAKASEGDAKKE) show a composition bias toward basic and acidic residues. The segment covering 150-161 (EEDDDEEVDADG) has biased composition (acidic residues). The region spanning 162–200 (IEDKDIELVMTQAGVSRTKAIKALKENDNDIVNSIMALS) is the UBA domain.

It belongs to the NAC-alpha family. In terms of assembly, part of the nascent polypeptide-associated complex (NAC), consisting of EGD2 and EGD1. NAC associates with ribosomes via EGD1.

Its subcellular location is the cytoplasm. It localises to the nucleus. In terms of biological role, component of the nascent polypeptide-associated complex (NAC), a dynamic component of the ribosomal exit tunnel, protecting the emerging polypeptides from interaction with other cytoplasmic proteins to ensure appropriate nascent protein targeting. The NAC complex also promotes mitochondrial protein import by enhancing productive ribosome interactions with the outer mitochondrial membrane and blocks the inappropriate interaction of ribosomes translating non-secretory nascent polypeptides with translocation sites in the membrane of the endoplasmic reticulum. EGD2 may also be involved in transcription regulation. This chain is Nascent polypeptide-associated complex subunit alpha (EGD2), found in Pyricularia oryzae (strain 70-15 / ATCC MYA-4617 / FGSC 8958) (Rice blast fungus).